Here is a 125-residue protein sequence, read N- to C-terminus: Glycine cleavage system H protein (125 aa).

The 83-residue stretch at 19 to 101 folds into the Lipoyl-binding domain; sequence IATIGITDYA…MGDGWFIKLR (83 aa). Lys60 is modified (N6-lipoyllysine).

The protein belongs to the GcvH family. As to quaternary structure, the glycine cleavage system is composed of four proteins: P, T, L and H. (R)-lipoate is required as a cofactor.

In terms of biological role, the glycine cleavage system catalyzes the degradation of glycine. The H protein shuttles the methylamine group of glycine from the P protein to the T protein. This Parvibaculum lavamentivorans (strain DS-1 / DSM 13023 / NCIMB 13966) protein is Glycine cleavage system H protein.